Consider the following 247-residue polypeptide: Submandibular gland secretory Glx-rich protein CB (247 aa).

Residues 1 to 18 (MLVVLLTAALLALSSAQG) form the signal peptide. The disordered stretch occupies residues 14–219 (SSAQGTDEEV…PQHYRGRPPK (206 aa)). 7 stretches are compositionally biased toward low complexity: residues 39–50 (PVDSGSDPPSAD), 58–71 (EGES…EPPA), 81–93 (QQEP…QEPP), 104–116 (QQEP…QEPP), 126–139 (QQQQ…QEPP), 150–159 (QQESTQAENQ), and 178–196 (VESP…QQTN). Tandem repeats lie at residues 67–89 (EEPP…QAEN), 90–112 (QEPP…QAEN), 113–135 (QEPP…QAEN), 136–158 (QEPP…QAEN), and 159–181 (QEPS…VESP). A 5 X 23 AA tandem repeats region spans residues 67 to 181 (EEPPATSGSE…QPEEGNVESP (115 aa)). Basic and acidic residues predominate over residues 197-212 (PEEKPPAPKTQEEPQH).

In terms of tissue distribution, submandibular gland acinar cells.

Its subcellular location is the secreted. In terms of biological role, GRP proteins have a marked affinity for hydroxyapatite. They may play a role in the formation of the protective acquired pellicle at the saliva-tooth interface. In Rattus norvegicus (Rat), this protein is Submandibular gland secretory Glx-rich protein CB (Grpcb).